The primary structure comprises 578 residues: Proline--tRNA ligase (578 aa).

This sequence belongs to the class-II aminoacyl-tRNA synthetase family. ProS type 1 subfamily. Homodimer.

The protein localises to the cytoplasm. The enzyme catalyses tRNA(Pro) + L-proline + ATP = L-prolyl-tRNA(Pro) + AMP + diphosphate. Catalyzes the attachment of proline to tRNA(Pro) in a two-step reaction: proline is first activated by ATP to form Pro-AMP and then transferred to the acceptor end of tRNA(Pro). As ProRS can inadvertently accommodate and process non-cognate amino acids such as alanine and cysteine, to avoid such errors it has two additional distinct editing activities against alanine. One activity is designated as 'pretransfer' editing and involves the tRNA(Pro)-independent hydrolysis of activated Ala-AMP. The other activity is designated 'posttransfer' editing and involves deacylation of mischarged Ala-tRNA(Pro). The misacylated Cys-tRNA(Pro) is not edited by ProRS. The protein is Proline--tRNA ligase of Burkholderia thailandensis (strain ATCC 700388 / DSM 13276 / CCUG 48851 / CIP 106301 / E264).